Reading from the N-terminus, the 196-residue chain is Large ribosomal subunit protein uL11m (196 aa).

This sequence belongs to the universal ribosomal protein uL11 family. In terms of assembly, component of the mitochondrial ribosome large subunit (39S) which comprises a 16S rRNA and about 50 distinct proteins.

It is found in the mitochondrion. The protein is Large ribosomal subunit protein uL11m (mRpL11) of Drosophila melanogaster (Fruit fly).